The primary structure comprises 298 residues: uncharacterized protein (298 aa).

Transmembrane regions (helical) follow at residues 5-25 (ILFG…MSAF), 36-56 (MENV…IYPF), 76-96 (VVVG…ISLA), 97-117 (TATA…PLLL), 124-144 (SALI…DPSV), 147-167 (VGLV…LAYI), 181-201 (VILA…FIDI), 216-236 (ILWI…LTYA), 244-264 (IIAP…LYLG), and 272-292 (SSLG…PALL). The EamA 1 domain maps to 17-141 (LCFGIMSAFV…GLVGVVLISD (125 aa)). Residues 183 to 288 (LAFAFGMSLL…ILCSGLLIAL (106 aa)) enclose the EamA 2 domain.

It belongs to the EamA transporter family.

The protein resides in the cell membrane. This is an uncharacterized protein from Helicobacter pylori (strain J99 / ATCC 700824) (Campylobacter pylori J99).